The primary structure comprises 486 residues: 2-hydroxymuconic semialdehyde dehydrogenase (486 aa).

Residues Glu254 and Cys288 contribute to the active site.

This sequence belongs to the aldehyde dehydrogenase family. In terms of assembly, homodimer.

It carries out the reaction (2Z,4E)-2-hydroxy-6-oxohexa-2,4-dienoate + NAD(+) + H2O = (2Z,4E)-2-hydroxyhexa-2,4-dienedioate + NADH + 2 H(+). Its pathway is aromatic compound metabolism; benzoate degradation via hydroxylation. In terms of biological role, 2-hydroxymuconic acid semialdehyde can be converted to 2-hydroxypent-2,4-dienoate either directly by the action of 2-hydroxymuconic semialdehyde hydrolase (HMSH) or by the action of three sequential enzymes, the first of which is HMSD. Can oxidize not only 2-hydroxymuconic semialdehyde and its analogs but also benzaldehyde and its analogs. The chain is 2-hydroxymuconic semialdehyde dehydrogenase (xylG) from Pseudomonas putida (Arthrobacter siderocapsulatus).